Consider the following 122-residue polypeptide: Histone H2B subacrosomal variant (122 aa).

A compositionally biased stretch (basic residues) spans 1 to 25; it reads MARNVTKRNKRCRGHQKAIYKKKSH. The segment at 1-30 is disordered; that stretch reads MARNVTKRNKRCRGHQKAIYKKKSHSSSES.

The protein belongs to the histone H2B family. As to expression, testis-specific. Restricted to the spermatid population of seminiferous epithelium. Not present in Sertoli cells, spermatogonia, spermatocytes or cells of the interstitial tissue (at protein level).

It localises to the cytoplasm. Its function is as follows. May act as an acrosome-nuclear docking protein in sperm. This Bos taurus (Bovine) protein is Histone H2B subacrosomal variant (SUBH2BV).